The chain runs to 187 residues: Ribosome-recycling factor (187 aa).

The segment at 141 to 169 (LKKGNKNGDFNDDEFHDLEKKVQNETDAG) is disordered.

Belongs to the RRF family.

It is found in the cytoplasm. Its function is as follows. Responsible for the release of ribosomes from messenger RNA at the termination of protein biosynthesis. May increase the efficiency of translation by recycling ribosomes from one round of translation to another. This chain is Ribosome-recycling factor, found in Limosilactobacillus reuteri (strain DSM 20016) (Lactobacillus reuteri).